Here is a 346-residue protein sequence, read N- to C-terminus: WD repeat-containing protein LWD1 (346 aa).

Met-1 carries the N-acetylmethionine modification. WD repeat units follow at residues 79–121 (EHPY…SRVE), 133–173 (EFCG…VDTQ), 176–214 (AHDK…HSTI), and 265–305 (RHQA…QHVE).

The protein localises to the nucleus. Clock protein essential for the proper expression phase and period length of both the oscillator and output genes known to participate in photoperiod sensing. Required for the expression of APRR9, APRR7, and APRR5. Regulated by APRR9 and APRR7 at the transcriptional level, indicating the existence of a positive feedback loop within the circadian clock. May function to delay the expression of the morning genes until dawn approaches. In Arabidopsis thaliana (Mouse-ear cress), this protein is WD repeat-containing protein LWD1 (LWD1).